Reading from the N-terminus, the 238-residue chain is tRNA1(Val) (adenine(37)-N6)-methyltransferase (238 aa).

The protein belongs to the methyltransferase superfamily. tRNA (adenine-N(6)-)-methyltransferase family.

It localises to the cytoplasm. The catalysed reaction is adenosine(37) in tRNA1(Val) + S-adenosyl-L-methionine = N(6)-methyladenosine(37) in tRNA1(Val) + S-adenosyl-L-homocysteine + H(+). Specifically methylates the adenine in position 37 of tRNA(1)(Val) (anticodon cmo5UAC). The sequence is that of tRNA1(Val) (adenine(37)-N6)-methyltransferase from Shewanella putrefaciens (strain CN-32 / ATCC BAA-453).